Here is a 539-residue protein sequence, read N- to C-terminus: Probable K(+)/H(+) antiporter subunit D (539 aa).

The next 14 helical transmembrane spans lie at Trp4–Leu23, Ala36–Ala58, Phe78–Leu100, Ala113–Gly135, Leu140–Leu162, Leu175–Met197, Met217–Leu239, Ala251–Phe273, Phe283–Ala305, Leu312–Gly331, Met335–Ile357, Val400–Ile422, Ala442–Ala464, and Val484–Ala506.

The protein belongs to the CPA3 antiporters (TC 2.A.63) subunit D family. As to quaternary structure, may form a hetero-oligomeric complex that consists of six subunits: PhaAB, PhaC, PhaD, PhaE, PhaF and PhaG.

The protein localises to the cell membrane. In terms of biological role, part of a K(+) efflux system which is required for the adaptation of R.meliloti to alkaline pH as well as for the infection process during symbiotic nodule development. This is Probable K(+)/H(+) antiporter subunit D (phaD) from Rhizobium meliloti (strain 1021) (Ensifer meliloti).